The sequence spans 570 residues: MSDFVDRVTVHVKGGDGGNGSAGIRREKYKPLAGPNGGNGGKGGSVILKADQNATSLLDFRFMPHRTADSGTMGLGDTKDGSNGADLVLPVPVGTVVFEARGAQGFPKKPGAVLADLRHAGDTYVAAAGGAGGLGNAALANRTRRAPGFALLGEPGDERDIILELKSIADVALVGFPSAGKSSLIAAMSAAKPKIADYPFTTLVPNLGVVQAGDMRYTIADVPGLIPGASQGKGLGLTFLRHIERTEIIAHVIDCVTIDPDRDPLSDYYALEKELGEYADDLDLPLGAIPIPERPRVIILNKIDVPDAKELADFVRPEFEKLDLPVYEISTASHAGLKELNFALAKLVKEMRAQIAEREESVDEERVVIKPLEEPGTQRRNGRNAQVREFEIEREDDGHGNFWFTVTGVKPERWVRQTNFDNDEAVGYLADRLAKLGVEDSLRKHGAHAGDEVRIGRGERAVAFDWDPTIAAGAEMLDGTQLGSRGKDLRLEEEDGRKRRRTNSERRREYHEMMDARAAVRAAMQAERAAGHWADPSIDDDRHDEQSLFGRGEVEEYEDEPGADGSRQLD.

The Obg domain occupies 2–168 (SDFVDRVTVH…RDIILELKSI (167 aa)). A disordered region spans residues 15-43 (GDGGNGSAGIRREKYKPLAGPNGGNGGKG). Residues 169-349 (ADVALVGFPS…LNFALAKLVK (181 aa)) form the OBG-type G domain. GTP is bound by residues 175-182 (GFPSAGKS), 200-204 (FTTLV), 221-224 (DVPG), 301-304 (NKID), and 330-332 (STA). 2 residues coordinate Mg(2+): S182 and T202. The 87-residue stretch at 382-468 (GRNAQVREFE…ERAVAFDWDP (87 aa)) folds into the OCT domain. The tract at residues 521 to 570 (RAAMQAERAAGHWADPSIDDDRHDEQSLFGRGEVEEYEDEPGADGSRQLD) is disordered.

This sequence belongs to the TRAFAC class OBG-HflX-like GTPase superfamily. OBG GTPase family. Monomer. Requires Mg(2+) as cofactor.

Its subcellular location is the cytoplasm. Functionally, an essential GTPase which binds GTP, GDP and possibly (p)ppGpp with moderate affinity, with high nucleotide exchange rates and a fairly low GTP hydrolysis rate. Plays a role in control of the cell cycle, stress response, ribosome biogenesis and in those bacteria that undergo differentiation, in morphogenesis control. The chain is GTPase Obg from Bifidobacterium animalis subsp. lactis (strain AD011).